Consider the following 189-residue polypeptide: MSDKIFHNLSGKTLVATPHVITKGIYHKSLIYMLSHTEEGAIGLIFNRLVNHIDLKSFFKIKNDEITTPVMVPIYLGGPVEHEKGFFLHSSDYNKNLLLDFHNDLAVSSNLEISEDIAFGKGPKNSLFIVGYTAWKPGQLEEELETNLWLVMDCNKEFIFADNPESKWHNALKHLGIDEIHFSSQIGNA.

This sequence belongs to the UPF0301 (AlgH) family.

This Rickettsia rickettsii (strain Iowa) protein is UPF0301 protein RrIowa_0061.